A 612-amino-acid chain; its full sequence is Glutamine--fructose-6-phosphate aminotransferase [isomerizing] (612 aa).

The active-site Nucleophile; for GATase activity is cysteine 2. A Glutamine amidotransferase type-2 domain is found at 2 to 220 (CGIVGAIRAH…DGDIALLASD (219 aa)). 2 consecutive SIS domains span residues 288-428 (AKSV…VRGL) and 461-602 (WAQQ…VDKP). The active-site For Fru-6P isomerization activity is the lysine 607.

As to quaternary structure, homodimer.

The protein resides in the cytoplasm. The catalysed reaction is D-fructose 6-phosphate + L-glutamine = D-glucosamine 6-phosphate + L-glutamate. Functionally, catalyzes the first step in hexosamine metabolism, converting fructose-6P into glucosamine-6P using glutamine as a nitrogen source. This chain is Glutamine--fructose-6-phosphate aminotransferase [isomerizing], found in Neisseria meningitidis serogroup A / serotype 4A (strain DSM 15465 / Z2491).